A 535-amino-acid chain; its full sequence is Sodium channel protein Nach (535 aa).

Over 1–49 the chain is Cytoplasmic; it reads MGHQEELKPEQVDLKVTPFVGYLRRTWSDFCATSSIHGLKYTRDEDTNK. A helical transmembrane segment spans residues 50-70; the sequence is IVHLVWLLISVVMFICAVVMA. Residues 71–471 lie on the Extracellular side of the membrane; sequence RTFYMDYRSS…LVSNLGSAFS (401 aa). N-linked (GlcNAc...) asparagine glycosylation is found at asparagine 165, asparagine 239, and asparagine 367. A helical transmembrane segment spans residues 472-492; the sequence is LFVGMSMLSVVEIIYYFSVIL. Residues 493–535 are Cytoplasmic-facing; sequence RKNYKLECETRSQMLHKKPKFAWPKANDTHSKEQKSVFIIHKS.

Belongs to the amiloride-sensitive sodium channel (TC 1.A.6) family. In terms of tissue distribution, embryonic and larval tracheal system; dorsal trunk (but not at fusion with transverse connective), several branches and terminal cells. Also expressed in adult tracheal system; dorsal trunk, but not at the spiracles.

It is found in the membrane. In terms of biological role, part of a complex that plays a role in tracheal liquid clearance. Probable role in sodium transport. This Drosophila melanogaster (Fruit fly) protein is Sodium channel protein Nach (Nach).